Here is a 252-residue protein sequence, read N- to C-terminus: Adenosylcobinamide-GDP ribazoletransferase (252 aa).

Helical transmembrane passes span 36 to 56 (LVPI…MLLV), 59 to 79 (FFYK…TGGI), 109 to 129 (VGTN…VILT), 133 to 153 (PAYM…GSIV), 170 to 192 (SFID…VIFL), 199 to 218 (GYII…KYFT), and 228 to 248 (ILGA…YAVL).

This sequence belongs to the CobS family. Requires Mg(2+) as cofactor.

Its subcellular location is the cell membrane. The enzyme catalyses alpha-ribazole + adenosylcob(III)inamide-GDP = adenosylcob(III)alamin + GMP + H(+). It catalyses the reaction alpha-ribazole 5'-phosphate + adenosylcob(III)inamide-GDP = adenosylcob(III)alamin 5'-phosphate + GMP + H(+). It functions in the pathway cofactor biosynthesis; adenosylcobalamin biosynthesis; adenosylcobalamin from cob(II)yrinate a,c-diamide: step 7/7. In terms of biological role, joins adenosylcobinamide-GDP and alpha-ribazole to generate adenosylcobalamin (Ado-cobalamin). Also synthesizes adenosylcobalamin 5'-phosphate from adenosylcobinamide-GDP and alpha-ribazole 5'-phosphate. This chain is Adenosylcobinamide-GDP ribazoletransferase, found in Clostridium acetobutylicum (strain ATCC 824 / DSM 792 / JCM 1419 / IAM 19013 / LMG 5710 / NBRC 13948 / NRRL B-527 / VKM B-1787 / 2291 / W).